The following is a 396-amino-acid chain: Phosphoglycerate kinase (396 aa).

Substrate-binding positions include 21–23 (DFN), Arg37, 60–63 (HLGR), Arg121, and Arg154. Residues Lys205, Gly296, Glu327, and 353 to 356 (GGDS) contribute to the ATP site.

Belongs to the phosphoglycerate kinase family. In terms of assembly, monomer.

The protein resides in the cytoplasm. The catalysed reaction is (2R)-3-phosphoglycerate + ATP = (2R)-3-phospho-glyceroyl phosphate + ADP. It participates in carbohydrate degradation; glycolysis; pyruvate from D-glyceraldehyde 3-phosphate: step 2/5. The protein is Phosphoglycerate kinase of Anaeromyxobacter dehalogenans (strain 2CP-1 / ATCC BAA-258).